A 122-amino-acid chain; its full sequence is Putative cryptic phosphonate transport system permease protein PhnE2 (122 aa).

Residues 1–114 (MLALFIHTTG…VTVSLLDFLS (114 aa)) form the ABC transmembrane type-1 domain. A run of 4 helical transmembrane segments spans residues 3–23 (ALFI…VEAI), 39–59 (LEEI…SYSL), 68–88 (SATV…WEAI), and 93–113 (FQQT…LDFL).

Belongs to the binding-protein-dependent transport system permease family. If the reading frame is restored, the complex is composed of two ATP-binding proteins (PhnC), two transmembrane proteins (PhnE) and a solute-binding protein (PhnD).

The protein localises to the cell inner membrane. Its function is as follows. C-terminal fragment of the PhnE protein, part of a phosphonate usage operon that is cryptic in K12 strains. Growth of K12 strains on phosphonate can be observed when it is used as the sole phosphorus source after a 60 hour lag period, suggesting the operon is activated. An intact PhnE in strain B is (AC A0A140NFA3). Part of the binding-protein-dependent transport system for phosphonates; probably responsible for the translocation of the substrate across the membrane. The polypeptide is Putative cryptic phosphonate transport system permease protein PhnE2 (phnE) (Escherichia coli (strain K12)).